A 537-amino-acid polypeptide reads, in one-letter code: Oviduct-specific glycoprotein (537 aa).

The N-terminal stretch at 1–18 (LLLCVGLLLVLKHHDGAA) is a signal peptide. The GH18 domain occupies 19-382 (HKLVCYFTNW…HTLNNLLVND (364 aa)). A disulfide bridge links Cys-23 with Cys-48. Chitin contacts are provided by residues 68-69 (PQ), 95-98 (GGWN), Tyr-139, 208-211 (LSYD), and Trp-352. Asn-399 carries N-linked (GlcNAc...) asparagine glycosylation. 2 disordered regions span residues 446 to 475 (EIATPTRTPLSFGRHTAAPEGKTESPGEKP) and 498 to 537 (TGQKVTPPGRKAGVPEKVTTPSGKMTVTPDGRAETLERRL). Positions 528-537 (GRAETLERRL) are enriched in basic and acidic residues.

The protein belongs to the glycosyl hydrolase 18 family. Oviduct.

Its subcellular location is the cytoplasmic vesicle. It is found in the secretory vesicle. In terms of biological role, binds to oocyte zona pellucida in vivo. May play a role in the fertilization process and/or early embryonic development. The polypeptide is Oviduct-specific glycoprotein (OVGP1) (Bos taurus (Bovine)).